The following is a 291-amino-acid chain: 3-hydroxy-5-phosphonooxypentane-2,4-dione thiolase (291 aa).

Lys203 (schiff-base intermediate with substrate) is an active-site residue.

The protein belongs to the DeoC/FbaB aldolase family. As to quaternary structure, homodecamer.

It is found in the cytoplasm. The enzyme catalyses dihydroxyacetone phosphate + acetyl-CoA = 3-hydroxy-2,4-dioxopentyl phosphate + CoA. In terms of biological role, involved in the degradation of phospho-AI-2, thereby terminating induction of the lsr operon and closing the AI-2 signaling cycle. Catalyzes the transfer of an acetyl moiety from 3-hydroxy-5-phosphonooxypentane-2,4-dione to CoA to form glycerone phosphate and acetyl-CoA. The sequence is that of 3-hydroxy-5-phosphonooxypentane-2,4-dione thiolase from Photorhabdus laumondii subsp. laumondii (strain DSM 15139 / CIP 105565 / TT01) (Photorhabdus luminescens subsp. laumondii).